A 389-amino-acid chain; its full sequence is Phospho-N-acetylmuramoyl-pentapeptide-transferase (389 aa).

The next 10 helical transmembrane spans lie at 21–41 (FITF…LFFG), 70–90 (GTPT…TLLW), 97–117 (FVWV…VDDY), 134–154 (YMWQ…SVSA), 189–209 (TISY…VIVG), 222–242 (GLAI…AYLT), 259–279 (AGEL…FLWF), 286–306 (VFMG…IAVI), 311–331 (IVLF…MIQV), and 366–386 (QVVV…LSTL).

This sequence belongs to the glycosyltransferase 4 family. MraY subfamily. Mg(2+) serves as cofactor.

Its subcellular location is the cell inner membrane. It carries out the reaction UDP-N-acetyl-alpha-D-muramoyl-L-alanyl-gamma-D-glutamyl-meso-2,6-diaminopimeloyl-D-alanyl-D-alanine + di-trans,octa-cis-undecaprenyl phosphate = di-trans,octa-cis-undecaprenyl diphospho-N-acetyl-alpha-D-muramoyl-L-alanyl-D-glutamyl-meso-2,6-diaminopimeloyl-D-alanyl-D-alanine + UMP. It participates in cell wall biogenesis; peptidoglycan biosynthesis. In terms of biological role, catalyzes the initial step of the lipid cycle reactions in the biosynthesis of the cell wall peptidoglycan: transfers peptidoglycan precursor phospho-MurNAc-pentapeptide from UDP-MurNAc-pentapeptide onto the lipid carrier undecaprenyl phosphate, yielding undecaprenyl-pyrophosphoryl-MurNAc-pentapeptide, known as lipid I. This is Phospho-N-acetylmuramoyl-pentapeptide-transferase from Herminiimonas arsenicoxydans.